A 112-amino-acid chain; its full sequence is Large ribosomal subunit protein uL22 (112 aa).

The protein belongs to the universal ribosomal protein uL22 family. Part of the 50S ribosomal subunit.

Its function is as follows. This protein binds specifically to 23S rRNA; its binding is stimulated by other ribosomal proteins, e.g. L4, L17, and L20. It is important during the early stages of 50S assembly. It makes multiple contacts with different domains of the 23S rRNA in the assembled 50S subunit and ribosome. The globular domain of the protein is located near the polypeptide exit tunnel on the outside of the subunit, while an extended beta-hairpin is found that lines the wall of the exit tunnel in the center of the 70S ribosome. The polypeptide is Large ribosomal subunit protein uL22 (Nitratidesulfovibrio vulgaris (strain DSM 19637 / Miyazaki F) (Desulfovibrio vulgaris)).